The chain runs to 333 residues: Probable tRNA-dihydrouridine synthase 1 (333 aa).

Residues 17–19 (PMA) and glutamine 71 each bind FMN. Cysteine 102 serves as the catalytic Proton donor. FMN-binding positions include lysine 141, 202–204 (NGD), and 226–227 (GR).

The protein belongs to the Dus family. The cofactor is FMN.

The catalysed reaction is a 5,6-dihydrouridine in tRNA + NAD(+) = a uridine in tRNA + NADH + H(+). It catalyses the reaction a 5,6-dihydrouridine in tRNA + NADP(+) = a uridine in tRNA + NADPH + H(+). Functionally, catalyzes the synthesis of 5,6-dihydrouridine (D), a modified base found in the D-loop of most tRNAs, via the reduction of the C5-C6 double bond in target uridines. This is Probable tRNA-dihydrouridine synthase 1 (dus1) from Bacillus subtilis (strain 168).